The chain runs to 422 residues: 3-phosphoshikimate 1-carboxyvinyltransferase (422 aa).

The 3-phosphoshikimate site is built by lysine 20, serine 21, and arginine 25. Phosphoenolpyruvate is bound at residue lysine 20. Residues glycine 92 and arginine 120 each coordinate phosphoenolpyruvate. Positions 163, 164, 165, 191, 304, and 331 each coordinate 3-phosphoshikimate. Residue glutamine 165 participates in phosphoenolpyruvate binding. The active-site Proton acceptor is the aspartate 304. Positions 335 and 377 each coordinate phosphoenolpyruvate.

The protein belongs to the EPSP synthase family. Monomer.

It is found in the cytoplasm. It carries out the reaction 3-phosphoshikimate + phosphoenolpyruvate = 5-O-(1-carboxyvinyl)-3-phosphoshikimate + phosphate. It functions in the pathway metabolic intermediate biosynthesis; chorismate biosynthesis. Functionally, catalyzes the transfer of the enolpyruvyl moiety of phosphoenolpyruvate (PEP) to the 5-hydroxyl of shikimate-3-phosphate (S3P) to produce enolpyruvyl shikimate-3-phosphate and inorganic phosphate. In Methanocorpusculum labreanum (strain ATCC 43576 / DSM 4855 / Z), this protein is 3-phosphoshikimate 1-carboxyvinyltransferase.